The following is a 191-amino-acid chain: Thymidylate kinase (191 aa).

7 to 14 (GVDGAGKS) serves as a coordination point for ATP.

This sequence belongs to the thymidylate kinase family.

The enzyme catalyses dTMP + ATP = dTDP + ADP. Functionally, phosphorylation of dTMP to form dTDP in both de novo and salvage pathways of dTTP synthesis. The sequence is that of Thymidylate kinase (tmk) from Helicobacter pylori (strain ATCC 700392 / 26695) (Campylobacter pylori).